The primary structure comprises 173 residues: Translocon-associated protein subunit delta (173 aa).

A signal peptide spans 1–23; it reads MAAMASLGALALLLLSSLSRCSA. At 24–144 the chain is on the lumenal side; that stretch reads EACLEPQITP…SVDHRGTWNG (121 aa). An intrachain disulfide couples Cys-26 to Cys-57. Lys-73 participates in a covalent cross-link: Glycyl lysine isopeptide (Lys-Gly) (interchain with G-Cter in ubiquitin). Residues 145–165 traverse the membrane as a helical segment; it reads PWVSTEVLAAAIGLVIYYLAF. Residues 166–173 lie on the Cytoplasmic side of the membrane; it reads SAKSHIQA.

This sequence belongs to the TRAP-delta family. In terms of assembly, heterotetramer of TRAP-alpha, TRAP-beta, TRAP-delta and TRAP-gamma.

The protein localises to the endoplasmic reticulum membrane. In terms of biological role, TRAP proteins are part of a complex whose function is to bind calcium to the ER membrane and thereby regulate the retention of ER resident proteins. This is Translocon-associated protein subunit delta (SSR4) from Homo sapiens (Human).